The following is an 89-amino-acid chain: Small ribosomal subunit protein uS15 (89 aa).

Belongs to the universal ribosomal protein uS15 family. As to quaternary structure, part of the 30S ribosomal subunit. Forms a bridge to the 50S subunit in the 70S ribosome, contacting the 23S rRNA.

Its function is as follows. One of the primary rRNA binding proteins, it binds directly to 16S rRNA where it helps nucleate assembly of the platform of the 30S subunit by binding and bridging several RNA helices of the 16S rRNA. In terms of biological role, forms an intersubunit bridge (bridge B4) with the 23S rRNA of the 50S subunit in the ribosome. The chain is Small ribosomal subunit protein uS15 from Bartonella bacilliformis (strain ATCC 35685 / KC583 / Herrer 020/F12,63).